Here is a 469-residue protein sequence, read N- to C-terminus: Glutamine synthetase (469 aa).

Residues 15–96 enclose the GS beta-grasp domain; sequence NDVKFIDVRF…INFFIHDPIT (82 aa). The 366-residue stretch at 104 to 469 folds into the GS catalytic domain; it reads PRNIAKKAEA…PHEFELYFDI (366 aa). The Mg(2+) site is built by E129 and E131. E205 contacts ATP. Mg(2+) is bound by residues E210 and E218. 221-223 serves as a coordination point for ATP; sequence YKF. Residues 262 to 263 and G263 contribute to the L-glutamate site; that span reads NG. Residue H267 coordinates Mg(2+). Residues 269–271 and S271 contribute to the ATP site; that span reads HQS. L-glutamate is bound by residues R320, E326, and R338. Residues R338, R343, and K352 each coordinate ATP. E357 contacts Mg(2+). R359 contributes to the L-glutamate binding site. Y397 is subject to O-AMP-tyrosine.

The protein belongs to the glutamine synthetase family. Oligomer of 12 subunits arranged in the form of two hexagons. The cofactor is Mg(2+).

Its subcellular location is the cytoplasm. The catalysed reaction is L-glutamate + NH4(+) + ATP = L-glutamine + ADP + phosphate + H(+). Its activity is regulated as follows. The activity of this enzyme could be controlled by adenylation under conditions of abundant glutamine. Catalyzes the ATP-dependent biosynthesis of glutamine from glutamate and ammonia. The protein is Glutamine synthetase of Streptomyces filamentosus (Streptomyces roseosporus).